The sequence spans 514 residues: MEISWGRAMWRNFLGQSPDWYKLALLVFLIVNPFIFLANPFIAGWLLVAEFIFTLAMALKCYPLLPGGLLAIEAVIIGMTSAAHVREEVAANLEVLLLLMFMVAGIYFMKQLLLFIFTRLLLSIRSKMVLSLAFCVAAAFLSAFLDALTVVAVVISVAVGFYGIYHRVASSRGEENDMLDDSHIDPHYKTVLEQFRGFLRSLMMHAGVGTALGGVMTMVGEPQNLIIAKAAGWHFGDFFLRMSPVTVPVLVCGLLTCMLVEKMRWFGYGETLPEKVRDVLQQFDDQSRKKRTRQDKIKLIVQAIIGVWLVTALALHLAEVGLIGLSVIILATALTGVTDEHAIGKAFTESLPFTALLTVFFSIVAVIIDQHLFAPIIQFVLQASEHAQLTLFYLFNGLLSSISDNVFVGTIYINEAKAAMENGAISLKQFELLAVAINTGTNLPSVATPNGQAAFLFLLTSALAPLIRLSYGRMVWMALPYTIVLTLIGLLCVEFTLAPATEWMTQAGWLATLS.

The next 12 helical transmembrane spans lie at 23 to 43 (LALLVFLIVNPFIFLANPFIA), 63 to 83 (PLLPGGLLAIEAVIIGMTSAA), 97 to 117 (LLLMFMVAGIYFMKQLLLFIF), 120 to 140 (LLLSIRSKMVLSLAFCVAAAF), 144 to 164 (FLDALTVVAVVISVAVGFYGI), 202 to 222 (LMMHAGVGTALGGVMTMVGEP), 238 to 258 (FFLRMSPVTVPVLVCGLLTCM), 303 to 323 (AIIGVWLVTALALHLAEVGLI), 357 to 377 (LTVFFSIVAVIIDQHLFAPII), 391 to 411 (LFYLFNGLLSSISDNVFVGTI), 447 to 467 (ATPNGQAAFLFLLTSALAPLI), and 475 to 495 (VWMALPYTIVLTLIGLLCVEF).

This sequence belongs to the NhaB Na(+)/H(+) (TC 2.A.34) antiporter family.

The protein localises to the cell inner membrane. It catalyses the reaction 2 Na(+)(in) + 3 H(+)(out) = 2 Na(+)(out) + 3 H(+)(in). In terms of biological role, na(+)/H(+) antiporter that extrudes sodium in exchange for external protons. In Salmonella heidelberg (strain SL476), this protein is Na(+)/H(+) antiporter NhaB.